The sequence spans 164 residues: UPF0114 protein Sbal223_3668 (164 aa).

4 helical membrane passes run 15–35, 53–73, 108–128, and 136–156; these read IMAPIYLGLSLVLIGLGIKFF, LVLVTLSLIDITLVGGLIVMV, KVAASIVAISSIHLLKIFMDV, and IMWYLLIHITFVLSAFAMGYL.

The protein belongs to the UPF0114 family.

It is found in the cell membrane. The protein is UPF0114 protein Sbal223_3668 of Shewanella baltica (strain OS223).